The sequence spans 356 residues: Protein RecA (356 aa).

Position 68–75 (68–75 (GPESSGKT)) interacts with ATP.

The protein belongs to the RecA family.

It localises to the cytoplasm. In terms of biological role, can catalyze the hydrolysis of ATP in the presence of single-stranded DNA, the ATP-dependent uptake of single-stranded DNA by duplex DNA, and the ATP-dependent hybridization of homologous single-stranded DNAs. It interacts with LexA causing its activation and leading to its autocatalytic cleavage. The protein is Protein RecA of Clostridium botulinum (strain Alaska E43 / Type E3).